A 618-amino-acid polypeptide reads, in one-letter code: Glucose starvation modulator protein 1 (618 aa).

A DNA-binding region (zn(2)-C6 fungal-type) is located at residues 20–48 (CEFCHTKHIQCDVGRPCQNCLKRNIGKFC). Residues 325-352 (ANANTHPSHNAKLESECDSSSHSDADLE) are disordered. Residues 335-352 (AKLESECDSSSHSDADLE) show a composition bias toward basic and acidic residues. The region spanning 466–538 (LLDLENMAKL…QIFNELLAFG (73 aa)) is the PAS domain.

This sequence belongs to the ERT1/acuK family.

Its subcellular location is the nucleus. Its function is as follows. Transcription factor which regulates nonfermentable carbon utilization. Binds specifically to 5'-CGGN(8)CGG-3' and 5'-CGGN(9)CGG-3' sequences in the promoter region. The polypeptide is Glucose starvation modulator protein 1 (GSM1) (Saccharomyces cerevisiae (strain ATCC 204508 / S288c) (Baker's yeast)).